Reading from the N-terminus, the 218-residue chain is C-type lectin domain family 2 member H (218 aa).

Over 1–52 the chain is Cytoplasmic; the sequence is MNAAKVETSSMGMLQRADLTAADCLQEGEMGKKIQGKCFRIISTVSPVKLYC. A helical; Signal-anchor for type II membrane protein membrane pass occupies residues 53–73; that stretch reads CYGVIMVLTVAVIALSVALSV. Over 74–218 the chain is Extracellular; the sequence is RNKIPAMEDR…SRVGSVPRHV (145 aa). A disulfide bridge links Cys-90 with Cys-101. The 105-residue stretch at 97–201 folds into the C-type lectin domain; it reads FGSKCFYFSE…SYTHRKWICS (105 aa). Residue Asn-110 is glycosylated (N-linked (GlcNAc...) asparagine). Cys-118 and Cys-200 are oxidised to a cystine.

As to expression, detected in ileum, liver, kidney and in IL2-activated natural killer cells.

The protein resides in the cell membrane. Functionally, lectin-type cell surface receptor. This is C-type lectin domain family 2 member H (Clec2h) from Mus musculus (Mouse).